A 147-amino-acid polypeptide reads, in one-letter code: Hemoglobin subunit beta (147 aa).

Valine 2 is modified (N-acetylvaline). The region spanning 3–147 (HLSAEEKGLV…VATALAHKYH (145 aa)) is the Globin domain. Threonine 13 carries the post-translational modification Phosphothreonine. Position 45 is a phosphoserine (serine 45). Lysine 60 bears the N6-acetyllysine mark. Histidine 64 is a binding site for heme b. Lysine 83 bears the N6-acetyllysine mark. Histidine 93 contributes to the heme b binding site. The residue at position 94 (cysteine 94) is an S-nitrosocysteine. Residue lysine 145 is modified to N6-acetyllysine.

The protein belongs to the globin family. Heterotetramer of two alpha chains and two beta chains. As to expression, red blood cells.

Its function is as follows. Involved in oxygen transport from the lung to the various peripheral tissues. The sequence is that of Hemoglobin subunit beta (HBB) from Scapanus orarius (Coast mole).